The following is a 205-amino-acid chain: Holliday junction branch migration complex subunit RuvA (205 aa).

A domain I region spans residues 1-64 (MIGRLRGVLV…EDAQLLYGFI (64 aa)). The domain II stretch occupies residues 65 to 143 (TKQERALFRL…SLMEASAGSE (79 aa)). Residues 144 to 156 (REFVLQSNYSPTP) are flexible linker. The segment at 157 to 205 (TVNSAEEDAISALISLGYKPPQASKSVSAAYKEGMDSETLIKAALKSML) is domain III.

Belongs to the RuvA family. As to quaternary structure, homotetramer. Forms an RuvA(8)-RuvB(12)-Holliday junction (HJ) complex. HJ DNA is sandwiched between 2 RuvA tetramers; dsDNA enters through RuvA and exits via RuvB. An RuvB hexamer assembles on each DNA strand where it exits the tetramer. Each RuvB hexamer is contacted by two RuvA subunits (via domain III) on 2 adjacent RuvB subunits; this complex drives branch migration. In the full resolvosome a probable DNA-RuvA(4)-RuvB(12)-RuvC(2) complex forms which resolves the HJ.

The protein localises to the cytoplasm. In terms of biological role, the RuvA-RuvB-RuvC complex processes Holliday junction (HJ) DNA during genetic recombination and DNA repair, while the RuvA-RuvB complex plays an important role in the rescue of blocked DNA replication forks via replication fork reversal (RFR). RuvA specifically binds to HJ cruciform DNA, conferring on it an open structure. The RuvB hexamer acts as an ATP-dependent pump, pulling dsDNA into and through the RuvAB complex. HJ branch migration allows RuvC to scan DNA until it finds its consensus sequence, where it cleaves and resolves the cruciform DNA. In Shewanella sp. (strain W3-18-1), this protein is Holliday junction branch migration complex subunit RuvA.